The chain runs to 148 residues: MTIWIDADACPKMIKDILFRAAIRTNTNLILVANSYLTYPNSPFIRSVLVEKGYDRADHYITSHMKAKDLVITADIPLAAEVIVKQGLAMSPRGELFTANNIKQRLTLRDINEQLRSAGERTGGPSALSAKEKTNFANALDRWLAKSK.

This sequence belongs to the UPF0178 family.

In Legionella pneumophila subsp. pneumophila (strain Philadelphia 1 / ATCC 33152 / DSM 7513), this protein is UPF0178 protein lpg0089.